The following is a 458-amino-acid chain: 5-hydroxytryptamine receptor 2C (458 aa).

The first 32 residues, 1–32 (MVNLRNAVHSFLVHLIGLLVWQSDISVSPVAA), serve as a signal peptide directing secretion. Over 33 to 55 (IVTDIFNTSDGGRFKFPDGVQNW) the chain is Extracellular. Asn-39 carries an N-linked (GlcNAc...) asparagine glycan. A helical transmembrane segment spans residues 56 to 80 (PALSIVIIIIMTIGGNILVIMAVSM). Residues 81–86 (EKKLHN) are Cytoplasmic-facing. A helical membrane pass occupies residues 87-111 (ATNYFLMSLAIADMLVGLLVMPLSL). Over 112 to 128 (LAILYDYVWPLPRYLCP) the chain is Extracellular. Residues Cys-127 and Cys-207 are joined by a disulfide bond. The chain crosses the membrane as a helical span at residues 129–151 (VWISLDVLFSTASIMHLCAISLD). Position 139 (Thr-139) interacts with ergotamine. The DRY motif; important for ligand-induced conformation changes signature appears at 151 to 153 (DRY). Topologically, residues 152–167 (RYVAIRNPIEHSRFNS) are cytoplasmic. A helical transmembrane segment spans residues 168–189 (RTKAIMKIAIVWAISIGVSVPI). Residues 190 to 213 (PVIGLRDEEKVFVNNTTCVLNDPN) lie on the Extracellular side of the membrane. Asn-204 is a glycosylation site (N-linked (GlcNAc...) asparagine). Leu-209 provides a ligand contact to ergotamine. The chain crosses the membrane as a helical span at residues 214-236 (FVLIGSFVAFFIPLTIMVITYCL). The Cytoplasmic portion of the chain corresponds to 237-311 (TIYVLRRQAL…AINNERKASK (75 aa)). A disordered region spans residues 274–301 (EENSANPNQDQNARRRKKKERRPRGTMQ). The span at 287–297 (RRRKKKERRPR) shows a compositional bias: basic residues. The helical transmembrane segment at 312-336 (VLGIVFFVFLIMWCPFFITNILSVL) threads the bilayer. A disulfide bond links Cys-337 and Cys-341. The Extracellular segment spans residues 337–347 (CEKSCNQKLME). The helical transmembrane segment at 348–370 (KLLNVFVWIGYVCSGINPLVYTL) threads the bilayer. The NPxxY motif; important for ligand-induced conformation changes and signaling motif lies at 364-368 (NPLVY). Over 371–458 (FNKIYRRAFS…SVVSERISSV (88 aa)) the chain is Cytoplasmic. The PDZ-binding motif lies at 456 to 458 (SSV).

Belongs to the G-protein coupled receptor 1 family. In terms of assembly, interacts with MPDZ. Interacts with ARRB2. Interacts with MPP3; this interaction stabilizes the receptor at the plasma membrane and prevents the desensitization of the HTR2C receptor-mediated calcium response. In terms of processing, N-glycosylated. As to expression, detected in brain.

Its subcellular location is the cell membrane. With respect to regulation, inhibited by inverse agonist ritanserin. G-protein coupled receptor for 5-hydroxytryptamine (serotonin). Also functions as a receptor for various drugs and psychoactive substances, including ergot alkaloid derivatives, 1-2,5,-dimethoxy-4-iodophenyl-2-aminopropane (DOI) and lysergic acid diethylamide (LSD). Ligand binding causes a conformation change that triggers signaling via guanine nucleotide-binding proteins (G proteins) and modulates the activity of downstream effectors. HTR2C is coupled to G(q)/G(11) G alpha proteins and activates phospholipase C-beta, releasing diacylglycerol (DAG) and inositol 1,4,5-trisphosphate (IP3) second messengers that modulate the activity of phosphatidylinositol 3-kinase and promote the release of Ca(2+) ions from intracellular stores, respectively. Beta-arrestin family members inhibit signaling via G proteins and mediate activation of alternative signaling pathways. Regulates neuronal activity via the activation of short transient receptor potential calcium channels in the brain, and thereby modulates the activation of pro-opiomelanocortin neurons and the release of CRH that then regulates the release of corticosterone. Plays a role in the regulation of appetite and eating behavior, responses to anxiogenic stimuli and stress. Plays a role in insulin sensitivity and glucose homeostasis. The chain is 5-hydroxytryptamine receptor 2C from Homo sapiens (Human).